Reading from the N-terminus, the 346-residue chain is Phosphoribosylformylglycinamidine cyclo-ligase (346 aa).

Belongs to the AIR synthase family.

The protein resides in the cytoplasm. The catalysed reaction is 2-formamido-N(1)-(5-O-phospho-beta-D-ribosyl)acetamidine + ATP = 5-amino-1-(5-phospho-beta-D-ribosyl)imidazole + ADP + phosphate + H(+). Its pathway is purine metabolism; IMP biosynthesis via de novo pathway; 5-amino-1-(5-phospho-D-ribosyl)imidazole from N(2)-formyl-N(1)-(5-phospho-D-ribosyl)glycinamide: step 2/2. This Colwellia psychrerythraea (strain 34H / ATCC BAA-681) (Vibrio psychroerythus) protein is Phosphoribosylformylglycinamidine cyclo-ligase.